The primary structure comprises 195 residues: Adenylate kinase (195 aa).

An ATP-binding site is contributed by 8–16; sequence GIPGVGKTT.

It belongs to the archaeal adenylate kinase family. In terms of assembly, homotrimer.

The protein resides in the cytoplasm. It catalyses the reaction AMP + ATP = 2 ADP. In Saccharolobus solfataricus (strain ATCC 35092 / DSM 1617 / JCM 11322 / P2) (Sulfolobus solfataricus), this protein is Adenylate kinase (adkA).